The primary structure comprises 466 residues: UDP-N-acetylmuramate--L-alanine ligase (466 aa).

114–120 (GTHGKTT) contributes to the ATP binding site.

This sequence belongs to the MurCDEF family.

Its subcellular location is the cytoplasm. The enzyme catalyses UDP-N-acetyl-alpha-D-muramate + L-alanine + ATP = UDP-N-acetyl-alpha-D-muramoyl-L-alanine + ADP + phosphate + H(+). It functions in the pathway cell wall biogenesis; peptidoglycan biosynthesis. In terms of biological role, cell wall formation. The polypeptide is UDP-N-acetylmuramate--L-alanine ligase (Mesorhizobium japonicum (strain LMG 29417 / CECT 9101 / MAFF 303099) (Mesorhizobium loti (strain MAFF 303099))).